We begin with the raw amino-acid sequence, 191 residues long: Cell number regulator 1 (191 aa).

The interval 13–44 is disordered; the sequence is FSAGAPPTAPPPPAAYHQQQQQHGANMDTSRP. Low complexity predominate over residues 27 to 37; sequence AYHQQQQQHGA. Residues 91–113 form a helical membrane-spanning segment; sequence IASGLVYGLICASTGMGCLYSCL.

Belongs to the cornifelin family. In terms of tissue distribution, expressed in roots, coleoptiles, stalks and silks. Detected in leaves, apical meristems, immature ears and pericarps. Highest expression in coleoptiles and silks.

The protein localises to the membrane. Its function is as follows. Acts as a negative regulator of cell number. This chain is Cell number regulator 1 (CNR1), found in Zea mays (Maize).